We begin with the raw amino-acid sequence, 389 residues long: Probable acyl-CoA dehydrogenase fadE25 (389 aa).

The protein belongs to the acyl-CoA dehydrogenase family. FAD is required as a cofactor.

The catalysed reaction is a 2,3-saturated acyl-CoA + A = a 2,3-dehydroacyl-CoA + AH2. In Mycobacterium bovis (strain ATCC BAA-935 / AF2122/97), this protein is Probable acyl-CoA dehydrogenase fadE25 (fadE25).